The chain runs to 680 residues: Pilus tip adhesin Cpa (680 aa).

The segment at residues 62 to 211 (CFNLTKHFPS…IFQSSDKTFQ (150 aa)) is a cross-link (isoglutamyl cysteine thioester (Cys-Gln)). The tract at residues 217–236 (EYVPDTPPKPGEEPPAKTEK) is disordered. Residues 226–236 (PGEEPPAKTEK) are compositionally biased toward basic and acidic residues. The isoaspartyl lysine isopeptide (Lys-Asp) cross-link spans 243–546 (KYAEGDYSKL…ELIDVISMED (304 aa)). The region spanning 253–311 (LEGATLKLAQIEGSGFQEKIFDSNKSGEKVELPNGTYVLSELKPPQGYGVATPITFKVA) is the CNA-B domain. The segment at residues 374–526 (CFNADLHSPP…FFVPNSSRYQ (153 aa)) is a cross-link (isoglutamyl cysteine thioester (Cys-Gln)). The isoaspartyl lysine isopeptide (Lys-Asn) cross-link spans 562-667 (KTVTGTIADK…KEDETVAFEN (106 aa)). The VPPTG sorting signal motif lies at 672–676 (VPPTG). Threonine 675 is covalently cross-linked (Threonyl lysine isopeptide (Thr-Lys) (interchain with K-? in major pilin subunit)). Positions 676–680 (GLTTD) are cleaved as a propeptide — removed by sortase.

Monomer. Post-translationally, proteolytically processed and assembled in pili through a transpeptidation reaction catalyzed by a sortase, which leads to a covalent link between Cpa and a major pilin subunit.

It localises to the fimbrium. Functionally, component of the pilus tip. Can bind covalently, via its two reactive thioester bonds, to molecular targets from host cell surface and can thus mediate adhesion of the streptococcal pili to host cells. Lysine side chains or a carbohydrate with a free amine group might be candidates for Cpa binding. In vitro, can covalently bind to spermidine, but it is unlikely that spermidine is the natural target of Cpa. This is Pilus tip adhesin Cpa (cpa) from Streptococcus pyogenes.